Consider the following 319-residue polypeptide: MKLSRISAINWNKIQDDKDLEVWNRLTSNFWLPEKVPLSNDIPAWQTLSAAEQQLTIRVFTGLTLLDTIQNIAGAPSLMADAITPHEEAVLSNISFMEAVHARSYSSIFSTLCQTKEVDAAYAWSEENPPLQRKAQIILAHYVSDEPLKKKIASVFLESFLFYSGFWLPMYFSSRGKLTNTADLIRLIIRDEAVHGYYIGYKYQIALQKLSAIEREELKLFALDLLMELYDNEIRYTEALYAETGWVNDVKAFLCYNANKALMNLGYEALFPPEMADVNPAILAALSPNADENHDFFSGSGSSYVMGKTVETEDEDWNF.

Residues Asp-67, Glu-98, and His-101 each contribute to the Fe cation site. Tyr-105 is an active-site residue. Glu-158, Glu-192, and His-195 together coordinate Fe cation.

It belongs to the ribonucleoside diphosphate reductase small chain family. In terms of assembly, tetramer of two alpha and two beta subunits. The cofactor is Fe cation.

The enzyme catalyses a 2'-deoxyribonucleoside 5'-diphosphate + [thioredoxin]-disulfide + H2O = a ribonucleoside 5'-diphosphate + [thioredoxin]-dithiol. Provides the precursors necessary for DNA synthesis. Catalyzes the biosynthesis of deoxyribonucleotides from the corresponding ribonucleotides. R2F contains the tyrosyl radical required for catalysis. This Salmonella typhimurium (strain LT2 / SGSC1412 / ATCC 700720) protein is Ribonucleoside-diphosphate reductase 2 subunit beta (nrdF).